Reading from the N-terminus, the 513-residue chain is Xylose import ATP-binding protein XylG (513 aa).

2 consecutive ABC transporter domains span residues 5 to 242 (LEMK…VGRE) and 259 to 505 (LRVE…LRSE). 37–44 (GENGSGKS) lines the ATP pocket.

It belongs to the ABC transporter superfamily. Xylose importer (TC 3.A.1.2.4) family. In terms of assembly, the complex is composed of two ATP-binding proteins (XylG), two transmembrane proteins (XylH) and a solute-binding protein (XylF).

The protein localises to the cell inner membrane. It carries out the reaction D-xylose(out) + ATP + H2O = D-xylose(in) + ADP + phosphate + H(+). Its function is as follows. Part of the ABC transporter complex XylFGH involved in xylose import. Responsible for energy coupling to the transport system. The chain is Xylose import ATP-binding protein XylG from Pectobacterium atrosepticum (strain SCRI 1043 / ATCC BAA-672) (Erwinia carotovora subsp. atroseptica).